The following is a 178-amino-acid chain: Caveolin-1 (178 aa).

Ser2 bears the N-acetylserine mark. Ser2 bears the Phosphoserine mark. The tract at residues 2-94 (SGGKYVDSEG…WKASFTTFTV (93 aa)) is required for homooligomerization. Over 2–104 (SGGKYVDSEG…TKYWFYRLLS (103 aa)) the chain is Cytoplasmic. Lys5 carries the N6-acetyllysine; alternate modification. A Glycyl lysine isopeptide (Lys-Gly) (interchain with G-Cter in ubiquitin); alternate cross-link involves residue Lys5. At Tyr6 the chain carries Phosphotyrosine. Ser9 is modified (phosphoserine). Tyr14 is modified (phosphotyrosine; by ABL1). At Tyr25 the chain carries Phosphotyrosine. Glycyl lysine isopeptide (Lys-Gly) (interchain with G-Cter in ubiquitin) cross-links involve residues Lys26 and Lys30. The residue at position 37 (Ser37) is a Phosphoserine. Glycyl lysine isopeptide (Lys-Gly) (interchain with G-Cter in ubiquitin) cross-links involve residues Lys39, Lys47, and Lys57. The interval 82 to 94 (DGIWKASFTTFTV) is interaction with CAVIN3. The segment at residues 105-125 (ALFGIPMALIWGIYFAILSFL) is an intramembrane region (helical). Residues 126–178 (HIWAVVPCIKSFLIEIQCISRVYSIYIHTVCDPLFEAIGKIFSNVRISLQKEI) are Cytoplasmic-facing. Residues 131–142 (VPCIKSFLIEIQ) are interacts with SPRY1, SPRY2, SPRY3 and SPRY4. 3 S-palmitoyl cysteine lipidation sites follow: Cys133, Cys143, and Cys156. The interacts with SPRY1, SPRY2, and SPRY4 stretch occupies residues 149 to 160 (SIYIHTVCDPLF). An interacts with SPRY1, SPRY2, SPRY3 and SPRY4 region spans residues 167–178 (FSNVRISLQKEI).

Belongs to the caveolin family. Homooligomer. Interacts with GLIPR2. Interacts with NOSTRIN. Interacts with SNAP25 and STX1A. Interacts (via the N-terminus) with DPP4; the interaction is direct. Interacts with CTNNB1, CDH1 and JUP. Interacts with PACSIN2; this interaction induces membrane tubulation. Interacts with SLC7A9. Interacts with BMX and BTK. Interacts with TGFBR1. Interacts with CAVIN3 (via leucine-zipper domain) in a cholesterol-sensitive manner. Interacts with CAVIN1. Interacts with EHD2 in a cholesterol-dependent manner. Forms a ternary complex with UBXN6 and VCP; mediates CAV1 targeting to lysosomes for degradation. Interacts with ABCG1; this interaction regulates ABCG1-mediated cholesterol efflux. Interacts with NEU3; this interaction enhances NEU3 sialidase activity within caveola. Interacts (via C-terminus) with SPRY1, SPRY2 (via C-terminus), SPRY3, and SPRY4. Interacts with IGFBP5; this interaction allows trafficking of IGFBP5 from the plasma membrane to the nucleus. Phosphorylated at Tyr-14 by ABL1 in response to oxidative stress. Post-translationally, ubiquitinated. Undergo monoubiquitination and multi- and/or polyubiquitination. Monoubiquitination of N-terminal lysines promotes integration in a ternary complex with UBXN6 and VCP which promotes oligomeric CAV1 targeting to lysosomes for degradation. Ubiquitinated by ZNRF1; leading to degradation and modulation of the TLR4-mediated immune response.

The protein localises to the golgi apparatus membrane. It localises to the cell membrane. It is found in the membrane. The protein resides in the caveola. Its subcellular location is the membrane raft. Functionally, may act as a scaffolding protein within caveolar membranes. Forms a stable heterooligomeric complex with CAV2 that targets to lipid rafts and drives caveolae formation. Mediates the recruitment of CAVIN proteins (CAVIN1/2/3/4) to the caveolae. Interacts directly with G-protein alpha subunits and can functionally regulate their activity. Involved in the costimulatory signal essential for T-cell receptor (TCR)-mediated T-cell activation. Its binding to DPP4 induces T-cell proliferation and NF-kappa-B activation in a T-cell receptor/CD3-dependent manner. Recruits CTNNB1 to caveolar membranes and may regulate CTNNB1-mediated signaling through the Wnt pathway. Negatively regulates TGFB1-mediated activation of SMAD2/3 by mediating the internalization of TGFBR1 from membrane rafts leading to its subsequent degradation. Binds 20(S)-hydroxycholesterol (20(S)-OHC). This Aotus nancymaae (Ma's night monkey) protein is Caveolin-1 (CAV1).